The primary structure comprises 883 residues: Alanine--tRNA ligase (883 aa).

The Zn(2+) site is built by histidine 563, histidine 567, cysteine 677, and histidine 681.

The protein belongs to the class-II aminoacyl-tRNA synthetase family. Zn(2+) is required as a cofactor.

It localises to the cytoplasm. It carries out the reaction tRNA(Ala) + L-alanine + ATP = L-alanyl-tRNA(Ala) + AMP + diphosphate. In terms of biological role, catalyzes the attachment of alanine to tRNA(Ala) in a two-step reaction: alanine is first activated by ATP to form Ala-AMP and then transferred to the acceptor end of tRNA(Ala). Also edits incorrectly charged Ser-tRNA(Ala) and Gly-tRNA(Ala) via its editing domain. The sequence is that of Alanine--tRNA ligase from Cereibacter sphaeroides (strain ATCC 17023 / DSM 158 / JCM 6121 / CCUG 31486 / LMG 2827 / NBRC 12203 / NCIMB 8253 / ATH 2.4.1.) (Rhodobacter sphaeroides).